We begin with the raw amino-acid sequence, 171 residues long: uncharacterized protein (171 aa).

This is an uncharacterized protein from Ureaplasma parvum serovar 3 (strain ATCC 700970).